Reading from the N-terminus, the 692-residue chain is Formate hydrogenlyase transcriptional activator (692 aa).

In terms of domain architecture, GAF spans 202 to 344 (DIDELVSEVA…QIAERVAIAV (143 aa)). The Sigma-54 factor interaction domain occupies 381 to 610 (IIGRSEAMYN…LENVVERAVL (230 aa)). Residues 409–416 (GETGTGKE) and 472–481 (ADKSSLFLDE) each bind ATP. A DNA-binding region (H-T-H motif) is located at residues 663–682 (PKGAAQRLGLKRTTLLSRMK).

Required for induction of expression of the formate dehydrogenase H and hydrogenase-3 structural genes. The chain is Formate hydrogenlyase transcriptional activator (fhlA) from Salmonella typhimurium (strain SL1344).